The primary structure comprises 747 residues: ATPase family gene 2 protein homolog B (747 aa).

Methionine 1 carries the post-translational modification N-acetylmethionine. Residues 234-241 and 500-507 contribute to the ATP site; these read GPPGVGKT and GPPGCAKT.

The protein belongs to the AAA ATPase family. AFG2 subfamily. In terms of assembly, part of the 55LCC heterohexameric ATPase complex composed at least of AIRIM, AFG2A, AFG2B and CINP. Associates with pre-60S ribosomal particles. As to expression, expressed in neurons; also expressed at lower level in astrocytes, oligodendrocytes and microglia.

It is found in the cytoplasm. The protein localises to the cytoskeleton. It localises to the spindle. The protein resides in the nucleus. It carries out the reaction ATP + H2O = ADP + phosphate + H(+). In the context of 55LCC heterohexameric ATPase complex, the ATPase activity is stimulated by DNA binding and inhibited in presence of RNA. In terms of biological role, ATP-dependent chaperone part of the 55LCC heterohexameric ATPase complex which is chromatin-associated and promotes replisome proteostasis to maintain replication fork progression and genome stability. Required for replication fork progression, sister chromatid cohesion, and chromosome stability. The ATPase activity is specifically enhanced by replication fork DNA and is coupled to cysteine protease-dependent cleavage of replisome substrates in response to replication fork damage. Uses ATPase activity to process replisome substrates in S-phase, facilitating their proteolytic turnover from chromatin to ensure DNA replication and mitotic fidelity. Plays an essential role in the cytoplasmic maturation steps of pre-60S ribosomal particles by promoting the release of shuttling protein RSL24D1/RLP24 from the pre-ribosomal particles. This chain is ATPase family gene 2 protein homolog B (Afg2b), found in Rattus norvegicus (Rat).